A 277-amino-acid polypeptide reads, in one-letter code: Histone-lysine N-methyltransferase set-17 (277 aa).

In terms of domain architecture, SET spans 135–246; it reads FRIEESKLPN…INQELLVWYG (112 aa). Tyr245 is an S-adenosyl-L-methionine binding site.

This sequence belongs to the class V-like SAM-binding methyltransferase superfamily. Expressed in the germline. Predominantly expressed in primary spermatocytes. Also expressed in the oocyte-producing germline of hermaphrodites.

It is found in the nucleus. It catalyses the reaction N(6)-methyl-L-lysyl(4)-[histone H3] + S-adenosyl-L-methionine = N(6),N(6)-dimethyl-L-lysyl(4)-[histone H3] + S-adenosyl-L-homocysteine + H(+). The catalysed reaction is L-lysyl(4)-[histone H3] + S-adenosyl-L-methionine = N(6)-methyl-L-lysyl(4)-[histone H3] + S-adenosyl-L-homocysteine + H(+). Its function is as follows. Histone methyltransferase that specifically mono- and di-methylates 'Lys-4' of histone H3 in vitro. Does not tri-methylate 'Lys-4' of histone H3 in vitro. Promotes spermatid development and fertility by positively regulating the transcription of spermatocyte-specific genes in primary spermatocytes. Together with spr-5, required for transgenerational fertility. The polypeptide is Histone-lysine N-methyltransferase set-17 (Caenorhabditis elegans).